The following is a 365-amino-acid chain: Flagellar P-ring protein 2 (365 aa).

The N-terminal stretch at 1 to 19 is a signal peptide; it reads MKKWIVMASLLLAALPAMS.

It belongs to the FlgI family. The basal body constitutes a major portion of the flagellar organelle and consists of four rings (L,P,S, and M) mounted on a central rod.

The protein resides in the periplasm. The protein localises to the bacterial flagellum basal body. Its function is as follows. Assembles around the rod to form the L-ring and probably protects the motor/basal body from shearing forces during rotation. The chain is Flagellar P-ring protein 2 from Chromobacterium violaceum (strain ATCC 12472 / DSM 30191 / JCM 1249 / CCUG 213 / NBRC 12614 / NCIMB 9131 / NCTC 9757 / MK).